The chain runs to 354 residues: MKKNGRDNNFYHLYKNKYLITGVTILSFILMFQYKYHEVLTLHDNSENAVQSSKLFWARLLFGRTRSRITGQILKMEIPNTYRLFIFNFLIKYMHINKEEIKYPIESYKSIGDFFSRYIREETRPIGDVSDYSIVSPCDSELIDYGELTSEYLENIKGVKFNVNTFLGSKFQKKHNDGSTKFFYAIFYLSPKKYHHFHAPFNFKYKIRRHISGELFPVFQGMFKFINNLFNINERVILSGEWKGGNVYYAAISAYNVGNIKIINDEELVTNNLRHQLSYMGGDINTKIFDSYKSVEVGDEIGEFRMGSSIVVIFENKKDFSWNVNQNQTVSVGQRLGGIGEPVKEENRFIKIRS.

The helical transmembrane segment at 18–36 (YLITGVTILSFILMFQYKY) threads the bilayer. Catalysis depends on charge relay system; for autoendoproteolytic cleavage activity residues D139, H198, and S308. S308 serves as the catalytic Schiff-base intermediate with substrate; via pyruvic acid; for decarboxylase activity. At S308 the chain carries Pyruvic acid (Ser); by autocatalysis.

It belongs to the phosphatidylserine decarboxylase family. PSD-B subfamily. Eukaryotic type I sub-subfamily. Heterodimer of a large membrane-associated beta subunit and a small pyruvoyl-containing alpha subunit. It depends on pyruvate as a cofactor. Post-translationally, is synthesized initially as an inactive proenzyme. Formation of the active enzyme involves a self-maturation process in which the active site pyruvoyl group is generated from an internal serine residue via an autocatalytic post-translational modification. Two non-identical subunits are generated from the proenzyme in this reaction, and the pyruvate is formed at the N-terminus of the alpha chain, which is derived from the carboxyl end of the proenzyme. The autoendoproteolytic cleavage occurs by a canonical serine protease mechanism, in which the side chain hydroxyl group of the serine supplies its oxygen atom to form the C-terminus of the beta chain, while the remainder of the serine residue undergoes an oxidative deamination to produce ammonia and the pyruvoyl prosthetic group on the alpha chain. During this reaction, the Ser that is part of the protease active site of the proenzyme becomes the pyruvoyl prosthetic group, which constitutes an essential element of the active site of the mature decarboxylase.

The protein localises to the membrane. It localises to the endoplasmic reticulum membrane. It carries out the reaction a 1,2-diacyl-sn-glycero-3-phospho-L-serine + H(+) = a 1,2-diacyl-sn-glycero-3-phosphoethanolamine + CO2. The protein operates within phospholipid metabolism; phosphatidylethanolamine biosynthesis; phosphatidylethanolamine from CDP-diacylglycerol: step 2/2. Protease activity is inhibited by PMSF. Catalyzes the formation of phosphatidylethanolamine (PtdEtn) from phosphatidylserine (PtdSer). Plays a central role in phospholipid metabolism and in the interorganelle trafficking of phosphatidylserine. The chain is Phosphatidylserine decarboxylase proenzyme from Plasmodium knowlesi (strain H).